Consider the following 274-residue polypeptide: Large ribosomal subunit protein uL2 (274 aa).

The interval 223 to 257 (VAMNPVDHPHGGGEGRTSGGRHPVTPWGIPTKGYK) is disordered.

The protein belongs to the universal ribosomal protein uL2 family. As to quaternary structure, part of the 50S ribosomal subunit. Forms a bridge to the 30S subunit in the 70S ribosome.

One of the primary rRNA binding proteins. Required for association of the 30S and 50S subunits to form the 70S ribosome, for tRNA binding and peptide bond formation. It has been suggested to have peptidyltransferase activity; this is somewhat controversial. Makes several contacts with the 16S rRNA in the 70S ribosome. The sequence is that of Large ribosomal subunit protein uL2 from Geobacter sulfurreducens (strain ATCC 51573 / DSM 12127 / PCA).